A 141-amino-acid chain; its full sequence is Acetyltransferase YpeA (141 aa).

The 141-residue stretch at 1–141 folds into the N-acetyltransferase domain; it reads MEIRVFRQED…GKRLIEDEEY (141 aa).

Belongs to the acetyltransferase family. YpeA subfamily.

The polypeptide is Acetyltransferase YpeA (Escherichia coli O157:H7).